Consider the following 526-residue polypeptide: Glutamate--cysteine ligase (526 aa).

This sequence belongs to the glutamate--cysteine ligase type 1 family. Type 1 subfamily.

The enzyme catalyses L-cysteine + L-glutamate + ATP = gamma-L-glutamyl-L-cysteine + ADP + phosphate + H(+). Its pathway is sulfur metabolism; glutathione biosynthesis; glutathione from L-cysteine and L-glutamate: step 1/2. This chain is Glutamate--cysteine ligase, found in Shewanella amazonensis (strain ATCC BAA-1098 / SB2B).